A 576-amino-acid polypeptide reads, in one-letter code: MSEQIAVKTILSGTELGPLADNERLKRESKNLRGTIVEDLQDRITGGFTNDNFQLIRFHGMYQQDDRDIRAERAKQKLEPLHNVMLRARMPGGIITPKQWLAIDKFAEENTSYGSLRLTTRQTFQFHGVLKPNIKLMHQTLNSIGIDSIATAGDVNRNVLCTTNPVESELHQEAYEWAKKISEHLLPKTRAYAEIWLDGEKLETTDEEPILGSNYLPRKFKTTVVIPPQNDVDVHANDLNFIAIANNGKLVGFNVLVGGGLAMTHGDTATYPRRADDFGFVPLEKTLEVAAAVVTTQRDWGNRSNRKNAKTKYTLDRVGVDVFKAEVEKRAGIQFEASRPYELTERGDRIGWVDGIDGKHHLALFIENGRLLDYPGKPLKTGVAEIAKIHQGDFRMTANQNLIVAGVPAEQKDQIEQIAREHGLIDDGHSEQRKNSMACVAFPTCPLAMAEAERFLPEFVTEIEGVLKKHNLPEDDNIIFRVTGCPNGCGRAMLAEIGLIGKAPGRYNFHLGGNRSGTRVPKMYKENITDRQILSEIDELVGRWATERQENEGFGDFTIRAGIVDEVKVSKRDFYA.

[4Fe-4S] cluster contacts are provided by C439, C445, C485, and C489. C489 contacts siroheme.

This sequence belongs to the nitrite and sulfite reductase 4Fe-4S domain family. Alpha(8)-beta(8). The alpha component is a flavoprotein, the beta component is a hemoprotein. Requires siroheme as cofactor. [4Fe-4S] cluster serves as cofactor.

It catalyses the reaction hydrogen sulfide + 3 NADP(+) + 3 H2O = sulfite + 3 NADPH + 4 H(+). It participates in sulfur metabolism; hydrogen sulfide biosynthesis; hydrogen sulfide from sulfite (NADPH route): step 1/1. Its function is as follows. Component of the sulfite reductase complex that catalyzes the 6-electron reduction of sulfite to sulfide. This is one of several activities required for the biosynthesis of L-cysteine from sulfate. This Aliivibrio salmonicida (strain LFI1238) (Vibrio salmonicida (strain LFI1238)) protein is Sulfite reductase [NADPH] hemoprotein beta-component.